The chain runs to 763 residues: MSELLSVALFLASVLVYAWKAGRNTWWFAATLTVLGLFVILNITRYASDYFTGDGINDAVLYTLTNSLTGAGVGKYILPGIGIVLALVGVFGALGWILRRRRHHPHHVGYSLLALLLALGSVDASPAFRQITELVKSQTRDGDPDFAVYYKEPAKTIPNPKLNLVYIYGESLERTYFDNDAFPNLTPELGALKNEGLDFSHTMQLPGTDYTIAGMVASQCGIPLFAPFEGNASASVSSFFPQNICLGDILKNAGYQNYFVQGANLRFAGKDVFLKSHGFDHLYGAEELKTVVTDPSYRNDWGFYDDTVLDEAWKKFEALSRSGQRFSLFTLTVDTHHPDGFISRTCNRKRYDYDSKPNQSFSAVSCSQENIARFINKIKASPWFKDTVIVVSSDHLAMNNTAWKYLNKQDRNNLFFILRGDKPQQETLAVKRNTMDNGATVLDILGGDNFIGLGRSSLSGQSLSEVFLNVKEKVLAMKPDIVRLWNFPKEMKAFTIDQDKNMIAFSGSHFRLPLLLRVSDKRVEPLPESEYSAPLRFQLADFAPRDNFVWVDRCYKMAQLWAPELALSTDWCVSQGQLGGQQTVQHVDKTQWKGKTAFKDTVIDMQRYKGNVDTLKIVDNDIRYKADSFIFNVAGAPEEVKQFSGISRPETWGRWSNAQLGDEVKIEYKAPLPKKFDLVITAKAFGDNANRPIPVRVGNEEQTLVLGHDVSTTTLHFNNPTDASTLVIAPPVPVSTNEGNILGHSPRKLGIGMVEIKVVNAES.

4 consecutive transmembrane segments (helical) span residues 1 to 21, 24 to 44, 77 to 97, and 108 to 128; these read MSEL…AWKA, NTWW…LNIT, ILPG…LGWI, and VGYS…SPAF.

This sequence belongs to the OpgB family.

The protein localises to the cell inner membrane. The enzyme catalyses a phosphatidylglycerol + a membrane-derived-oligosaccharide D-glucose = a 1,2-diacyl-sn-glycerol + a membrane-derived-oligosaccharide 6-(glycerophospho)-D-glucose.. It functions in the pathway glycan metabolism; osmoregulated periplasmic glucan (OPG) biosynthesis. Functionally, transfers a phosphoglycerol residue from phosphatidylglycerol to the membrane-bound nascent glucan backbones. In Salmonella arizonae (strain ATCC BAA-731 / CDC346-86 / RSK2980), this protein is Phosphoglycerol transferase I.